The chain runs to 192 residues: uncharacterized protein (192 aa).

Positions 72–192 (GATVLLIVPP…SLVISEFSLV (121 aa)) constitute a B12-binding domain.

This is an uncharacterized protein from Rhodobacter capsulatus (Rhodopseudomonas capsulata).